We begin with the raw amino-acid sequence, 135 residues long: Large ribosomal subunit protein eL32 (135 aa).

Belongs to the eukaryotic ribosomal protein eL32 family.

In Methanococcus vannielii, this protein is Large ribosomal subunit protein eL32 (rpl32e).